The following is a 632-amino-acid chain: tRNA uridine 5-carboxymethylaminomethyl modification enzyme MnmG (632 aa).

FAD contacts are provided by residues 15 to 20, Ile127, and Ser182; that span reads GAGHAG. 276 to 290 lines the NAD(+) pocket; that stretch reads GPRYCPSIEDKIVRF. An FAD-binding site is contributed by Gln373.

This sequence belongs to the MnmG family. As to quaternary structure, homodimer. Heterotetramer of two MnmE and two MnmG subunits. The cofactor is FAD.

Its subcellular location is the cytoplasm. NAD-binding protein involved in the addition of a carboxymethylaminomethyl (cmnm) group at the wobble position (U34) of certain tRNAs, forming tRNA-cmnm(5)s(2)U34. The sequence is that of tRNA uridine 5-carboxymethylaminomethyl modification enzyme MnmG from Streptococcus pyogenes serotype M12 (strain MGAS2096).